The sequence spans 511 residues: V-type proton ATPase subunit B, brain isoform (511 aa).

Arg-400 provides a ligand contact to ATP.

It belongs to the ATPase alpha/beta chains family. As to quaternary structure, V-ATPase is a heteromultimeric enzyme made up of two complexes: the ATP-hydrolytic V1 complex and the proton translocation V0 complex. The V1 complex consists of three catalytic AB heterodimers that form a heterohexamer, three peripheral stalks each consisting of EG heterodimers, one central rotor including subunits D and F, and the regulatory subunits C and H. The proton translocation complex V0 consists of the proton transport subunit a, a ring of proteolipid subunits c9c'', rotary subunit d, subunits e and f, and the accessory subunits ATP6AP1/Ac45 and ATP6AP2/PRR.

Its subcellular location is the apical cell membrane. The protein resides in the melanosome. It is found in the cytoplasm. The protein localises to the cytoplasmic vesicle. It localises to the secretory vesicle. Its subcellular location is the synaptic vesicle membrane. The protein resides in the clathrin-coated vesicle membrane. In terms of biological role, non-catalytic subunit of the V1 complex of vacuolar(H+)-ATPase (V-ATPase), a multisubunit enzyme composed of a peripheral complex (V1) that hydrolyzes ATP and a membrane integral complex (V0) that translocates protons. V-ATPase is responsible for acidifying and maintaining the pH of intracellular compartments and in some cell types, is targeted to the plasma membrane, where it is responsible for acidifying the extracellular environment. In renal intercalated cells, can partially compensate the lack of ATP6V1B1 and mediate secretion of protons (H+) into the urine under base-line conditions but not in conditions of acid load. This is V-type proton ATPase subunit B, brain isoform (ATP6V1B2) from Pongo abelii (Sumatran orangutan).